We begin with the raw amino-acid sequence, 389 residues long: Chalcone synthase 1 (389 aa).

Residue Cys164 is part of the active site.

It belongs to the thiolase-like superfamily. Chalcone/stilbene synthases family.

It carries out the reaction (E)-4-coumaroyl-CoA + 3 malonyl-CoA + 3 H(+) = 2',4,4',6'-tetrahydroxychalcone + 3 CO2 + 4 CoA. Its pathway is secondary metabolite biosynthesis; flavonoid biosynthesis. Functionally, the primary product of this enzyme is 4,2',4',6'-tetrahydroxychalcone (also termed naringenin-chalcone or chalcone) which can under specific conditions spontaneously isomerize into naringenin. This chain is Chalcone synthase 1 (CHS1), found in Daucus carota (Wild carrot).